We begin with the raw amino-acid sequence, 112 residues long: UPF0060 membrane protein Daro_2632 (112 aa).

Transmembrane regions (helical) follow at residues 7–27 (VLGL…LPWL), 34–54 (PVWL…LLTL), 59–79 (AGRI…IWLW), and 89–109 (WDLV…LQPA).

This sequence belongs to the UPF0060 family.

Its subcellular location is the cell inner membrane. The sequence is that of UPF0060 membrane protein Daro_2632 from Dechloromonas aromatica (strain RCB).